We begin with the raw amino-acid sequence, 1291 residues long: MLDVNFFDELRIGLATADDIRQWSHGEVKKPETINYRTLKPEKDGLFCEKIFGPTRDWECYCGKYKRVRFKGIICERCGVEVTRAKVRRERMGHIELAAPVTHIWYFKGVPSRLGYLLDLAPKDLEKVIYFAAYMVTWVDTEARERDLPSLEAQISVERQHLEQRRDSAIEERHRKLEADLAELEEQGAKADARRKVREAAEREIRQIRDRAQREIDRLEEVWNRFKNLKVQDLEGDEQLYREMRDRFGKYFRGGMGAQAIKERLANFDLEAEAEKLREIIRTGKGQKKARALKRLKVVSAFLNTRNSPMGMVLDCVPVIPPDLRPMVQLDGGRFATSDLNDLYRRVINRNNRLKRLLDLGAPEIIVNNEKRMLQEAVDALFDNGRRGRPVTGPGNRPLKSLSDMLKGKQGRFRQNLLGKRVDYSGRSVIVVGPQLKLHQCGLPKQMALELFKPFVMKRLVDLNHAQNIKSAKRMVERARPVVWDVLEEVISEHPVLLNRAPTLHRLGIQAFEPQLVEGKAIQIHPLVCTAFNADFDGDQMAVHLPLSAEAQAEARILMLATNNILKPSDGKPVTMPTQDMVIGLYYLTTMKEGAKGEGRAFSNIGEAIMAYDLGELDLQAKIKLRVEGDTVPPVNWEPPEDYQPGQPYILETTLGRYLFNETTPEDYPFVNQQMGKKQLSALVTELAEKYSKVQVATTLDALKDAGYYWATRSGLTISISDVIPPPNKQQILDKYEQQAQKIQRQYERGLISDDERRQELIHIWTKATDEVAKDMEENSPPDNPVWMMVNSGSRGNPLQVRQIAAIRGLVSNTKGETIPRPIKSSYREGLTVLEYFISTHGQRKGLADTALRTADSGYLTRRLVDVAQDVIVREVDCGTDRFLWQEIGERRPDGTIVRKHNVENTGFGRTLAEDVVVDGKVIATKLSDTTEALIDKLLAAGVTRIRIRSALVCESKIGVCATCYGRSLATGKPVDVGEAVGIIAAQSIGEPGTQLTMRTFHMGGTAGQDITHGLPRVQELFEARVPKGVAPISEVEGRVRIEETDKSRKIIVVPDDGSDEVSYQVPMRAPLLVQDGQRVEVGQQLVQGTVNPHEILRILGPRAVQQHLVSEVQEVYKSQGVSIHDKHIEIIVRQMLKRVNVLESGDTKLLPGEMIERPKFEEINRRVVAEGGQPASARPVLLGITKASLATESWLSAASFQETTRVLTENAIHGKSDPLLGLKENVIIGKLIPAGTGMPQYRNIRVEPTEEAKASMYSVSSYEEPSEYTFGQGSGEAVPLEDYDFGSYNR.

Cys60, Cys62, Cys75, and Cys78 together coordinate Zn(2+). Residues Asp535, Asp537, and Asp539 each coordinate Mg(2+). Residues Cys878, Cys954, Cys961, and Cys964 each coordinate Zn(2+).

The protein belongs to the RNA polymerase beta' chain family. The RNAP catalytic core consists of 2 alpha, 1 beta, 1 beta' and 1 omega subunit. When a sigma factor is associated with the core the holoenzyme is formed, which can initiate transcription. The cofactor is Mg(2+). Requires Zn(2+) as cofactor.

The enzyme catalyses RNA(n) + a ribonucleoside 5'-triphosphate = RNA(n+1) + diphosphate. Functionally, DNA-dependent RNA polymerase catalyzes the transcription of DNA into RNA using the four ribonucleoside triphosphates as substrates. This is DNA-directed RNA polymerase subunit beta' from Thermobifida fusca (strain YX).